A 125-amino-acid polypeptide reads, in one-letter code: Transmembrane protein 14EP (125 aa).

A run of 2 helical transmembrane segments spans residues 9 to 29 (VPLY…GISG) and 81 to 101 (ILTL…LIVS).

The protein belongs to the TMEM14 family.

It localises to the membrane. In Homo sapiens (Human), this protein is Transmembrane protein 14EP (TMEM14EP).